The chain runs to 905 residues: MSEYNQNSNNDTFLSRVFGLHSVYNQLQDEYQYYDPDVDYQQSFMNGGVLSSHVREEGNENTNNDNTNLLDSESDSDSSSSLSSPPSPIVSFTGKEHNQNEDSTKVHWDTTRPHYGQDNDITTSIPKDPPKKNMVNTAKNFINKLHPATDSLPMYNQPQQFRKPPPEGPSVQTVYQKKQHKSKRKYVIPPKERALYLWANITNMDEFLTDVYYYYRGNGMLNIVLTRLVDLLILAFILSFTVFLKWGINYDFFMSSSSDRASVTLKDLVIPNFISEMVPVSVKLLLLGFSGYIVLRLVQLYFDYNYKLKEIKNFYHYLIGIPNDDELMTISWIVIVERLMALKDYNSLTSTNTNLPAQFLSDLNSKVRLNAHDIANRIMRKENYIIALINKEVLDLSLSIPFLSNVNSFLSNKSVLTKTLDWNIKLCINNFIFNQHGQINSHVLKDFNRNQLSKELSARFKMAAIINLLLCPFIVIYFVLLYFFRYFNEYKSNPSSILGLRQYTPWAEWKLREFNELPHFFIKRLHLSIGPANIYINQFPRGFWVINLMNFVNFVSGAITAILVLMGLWFDNEEHNFWSFEITENKSSLFYISLFGTVWAITSSSLTSTNSNTSENLNSQTSSFFYDPEASLRYVSQFTHYLPSSWNGRLHTVQVKNEFCELFSMKIIIIINEILSLILTPFILWFKVSNSSGAIIDFFREYSIHVDGLGYVCYFAMFNFEQKDKNMMMSLNKSKKRKPRKSRANAKKKASSKSKSRSDEIELDNVNSNKADKSKLSDSETSSNSDDNDDTDINNDYYQDDKMIKSYMYFLETCGNDKAKQASKLTSNEQLSTKPSRIAKPDNSQSVVGDPTPSFLYQPLTSNSIDDSSYNINYNIDEQEEESSKGKRSGVLGMINQFYKHDRNR.

The Cytoplasmic portion of the chain corresponds to 1 to 227 (MSEYNQNSNN…NGMLNIVLTR (227 aa)). The disordered stretch occupies residues 55–132 (REEGNENTNN…TSIPKDPPKK (78 aa)). Residues 60-84 (ENTNNDNTNLLDSESDSDSSSSLSS) are compositionally biased toward low complexity. The segment covering 94–117 (GKEHNQNEDSTKVHWDTTRPHYGQ) has biased composition (basic and acidic residues). Residues 228–248 (LVDLLILAFILSFTVFLKWGI) traverse the membrane as a helical segment. Over 249-272 (NYDFFMSSSSDRASVTLKDLVIPN) the chain is Lumenal. The chain crosses the membrane as a helical span at residues 273 to 293 (FISEMVPVSVKLLLLGFSGYI). Topologically, residues 294 to 463 (VLRLVQLYFD…KELSARFKMA (170 aa)) are cytoplasmic. Residues 464 to 484 (AIINLLLCPFIVIYFVLLYFF) lie within the membrane without spanning it. The Cytoplasmic segment spans residues 485–549 (RYFNEYKSNP…PRGFWVINLM (65 aa)). Residues 550-570 (NFVNFVSGAITAILVLMGLWF) traverse the membrane as a helical segment. Topologically, residues 571–588 (DNEEHNFWSFEITENKSS) are lumenal. A helical membrane pass occupies residues 589–609 (LFYISLFGTVWAITSSSLTST). Topologically, residues 610-665 (NSNTSENLNSQTSSFFYDPEASLRYVSQFTHYLPSSWNGRLHTVQVKNEFCELFSM) are cytoplasmic. An intramembrane segment occupies 666-686 (KIIIIINEILSLILTPFILWF). Residues 687–905 (KVSNSSGAII…NQFYKHDRNR (219 aa)) lie on the Cytoplasmic side of the membrane. Disordered stretches follow at residues 731–795 (LNKS…DINN) and 821–851 (QASK…VGDP). The span at 733-755 (KSKKRKPRKSRANAKKKASSKSK) shows a compositional bias: basic residues. The segment covering 823–835 (SKLTSNEQLSTKP) has biased composition (polar residues).

This sequence belongs to the ATG9 family. Homotrimer; forms a homotrimer with a central pore that forms a path between the two membrane leaflets. In terms of processing, phosphorylated by ATG1. ATG1 phosphorylation is required for preautophagosome elongation.

It is found in the preautophagosomal structure membrane. Its subcellular location is the cytoplasmic vesicle membrane. The protein resides in the golgi apparatus membrane. It localises to the endoplasmic reticulum membrane. The catalysed reaction is a 1,2-diacyl-sn-glycero-3-phosphocholine(in) = a 1,2-diacyl-sn-glycero-3-phosphocholine(out). It carries out the reaction a 1,2-diacyl-sn-glycero-3-phospho-L-serine(in) = a 1,2-diacyl-sn-glycero-3-phospho-L-serine(out). The enzyme catalyses a 1,2-diacyl-sn-glycero-3-phosphoethanolamine(in) = a 1,2-diacyl-sn-glycero-3-phosphoethanolamine(out). It catalyses the reaction a 1,2-diacyl-sn-glycero-3-phospho-(1D-myo-inositol-3-phosphate)(in) = a 1,2-diacyl-sn-glycero-3-phospho-(1D-myo-inositol-3-phosphate)(out). Phospholipid scramblase involved in autophagy and cytoplasm to vacuole transport (Cvt) vesicle formation. Cycles between the preautophagosomal structure/phagophore assembly site (PAS) and the cytoplasmic vesicle pool and supplies membrane for the growing autophagosome. Lipid scramblase activity plays a key role in preautophagosomal structure/phagophore assembly by distributing the phospholipids that arrive through ATG2 from the cytoplasmic to the luminal leaflet of the bilayer, thereby driving autophagosomal membrane expansion. Required for mitophagy. Also involved in endoplasmic reticulum-specific autophagic process and is essential for the survival of cells subjected to severe ER stress. Different machineries are required for anterograde trafficking to the PAS during either the Cvt pathway or bulk autophagy and for retrograde trafficking. In Debaryomyces hansenii (strain ATCC 36239 / CBS 767 / BCRC 21394 / JCM 1990 / NBRC 0083 / IGC 2968) (Yeast), this protein is Autophagy-related protein 9 (ATG9).